Here is a 359-residue protein sequence, read N- to C-terminus: Membrane-bound lytic murein transglycosylase C (359 aa).

The first 16 residues, 1–16, serve as a signal peptide directing secretion; the sequence is MKKYLALALIAPLLIS. A lipid anchor (N-palmitoyl cysteine) is attached at C17. C17 is lipidated: S-diacylglycerol cysteine.

This sequence belongs to the transglycosylase Slt family.

The protein localises to the cell outer membrane. It catalyses the reaction Exolytic cleavage of the (1-&gt;4)-beta-glycosidic linkage between N-acetylmuramic acid (MurNAc) and N-acetylglucosamine (GlcNAc) residues in peptidoglycan, from either the reducing or the non-reducing ends of the peptidoglycan chains, with concomitant formation of a 1,6-anhydrobond in the MurNAc residue.. Its function is as follows. Murein-degrading enzyme. May play a role in recycling of muropeptides during cell elongation and/or cell division. The chain is Membrane-bound lytic murein transglycosylase C from Shigella sonnei (strain Ss046).